The chain runs to 432 residues: Adenylosuccinate synthetase (432 aa).

Residues 13-19 (GDEGKGK) and 41-43 (GHT) contribute to the GTP site. D14 acts as the Proton acceptor in catalysis. Mg(2+)-binding residues include D14 and G41. IMP contacts are provided by residues 14-17 (DEGK), 39-42 (NAGH), T130, R144, Q225, T240, and R304. H42 (proton donor) is an active-site residue. 300–306 (AVTGRPR) lines the substrate pocket. Residues R306, 332–334 (KLD), and 415–417 (STG) each bind GTP.

This sequence belongs to the adenylosuccinate synthetase family. As to quaternary structure, homodimer. The cofactor is Mg(2+).

It localises to the cytoplasm. It carries out the reaction IMP + L-aspartate + GTP = N(6)-(1,2-dicarboxyethyl)-AMP + GDP + phosphate + 2 H(+). The protein operates within purine metabolism; AMP biosynthesis via de novo pathway; AMP from IMP: step 1/2. Its function is as follows. Plays an important role in the de novo pathway of purine nucleotide biosynthesis. Catalyzes the first committed step in the biosynthesis of AMP from IMP. The sequence is that of Adenylosuccinate synthetase from Actinobacillus pleuropneumoniae serotype 7 (strain AP76).